Consider the following 357-residue polypeptide: DNA integrity scanning protein DisA (357 aa).

Residues 3–141 (RPTLRETVAR…GGERHVVADS (139 aa)) enclose the DAC domain. ATP contacts are provided by residues glycine 70, leucine 88, and 101 to 105 (TRHRS).

This sequence belongs to the DisA family. Homooctamer. Mg(2+) is required as a cofactor.

The enzyme catalyses 2 ATP = 3',3'-c-di-AMP + 2 diphosphate. Participates in a DNA-damage check-point. DisA forms globular foci that rapidly scan along the chromosomes searching for lesions. Functionally, also has diadenylate cyclase activity, catalyzing the condensation of 2 ATP molecules into cyclic di-AMP (c-di-AMP). c-di-AMP likely acts as a signaling molecule that may couple DNA integrity with a cellular process. The protein is DNA integrity scanning protein DisA of Mycolicibacterium paratuberculosis (strain ATCC BAA-968 / K-10) (Mycobacterium paratuberculosis).